We begin with the raw amino-acid sequence, 241 residues long: Probable septum site-determining protein MinC (241 aa).

The protein belongs to the MinC family. Interacts with MinD and FtsZ.

In terms of biological role, cell division inhibitor that blocks the formation of polar Z ring septums. Rapidly oscillates between the poles of the cell to destabilize FtsZ filaments that have formed before they mature into polar Z rings. Prevents FtsZ polymerization. The protein is Probable septum site-determining protein MinC of Rhizobium rhizogenes (strain K84 / ATCC BAA-868) (Agrobacterium radiobacter).